Here is a 1041-residue protein sequence, read N- to C-terminus: MTDNAYPKLAGGAPDLPALELEVLDYWSRDDTFRASIARRDGAPEYVFYDGPPFANGLPHYGHLLTGYVKDIVPRYRTMRGYKVERRFGWDTHGLPAELEVERQLGITDKSQIEAMGIAAFNDACRASVLRYTDEWQAYVTRQARWVDFDNDYKTLDLAYMESVIWAFKQLWDKGLAYEGYRVLPYCWRDETPLSNHELRMDDDVYQSRQDPAVTVGFKVVGGQPDNGLDGAYLLVWTTTPWTLPSNLAVAVSPDITYVQVQAGDRRFVLAEARLAAYARELGEEPVVLGTYRGAELLGTRYLPPFAYFMDWPNAFQVLAGDFVTTDDGTGIVHMAPAYGEDDMVVAEAVGIAPVTPVDSKGRFDVTVADYQGQHVFDANAQIVRDLKTQSGPAAVNGPVLIRHETYEHPYPHCWRCRNPLIYRSVSSWFVRVTDFRDRMVELNQQITWYPEHVKDGQFGKWLQGARDWSISRNRYWGTPIPVWKSDDPAYPRIDVYGSLDELERDFGVRPANLHRPYIDELTRPNPDDPTGRSTMRRIPDVLDVWFDSGSMPYAQVHYPFENLDWFQGHYPGDFIVEYIGQTRGWFYTLHVLATALFDRPAFKTCVAHGIVLGFDGQKMSKSLRNYPDVTEVFDRDGSDAMRWFLMASPILRGGNLIVTEQGIRDGVRQVLLPLWNTYSFLALYAPKVGTWRVDSVHVLDRYILAKLAVLRDDLSESMEVYDIPGACEHLRQFTEALTNWYVRRSRSRFWAEDADAIDTLHTVLEVTTRLAAPLLPLITEIIWRGLTRERSVHLTDWPAPDLLPSDADLVAAMDQVRDVCSAASSLRKAKKLRVRLPLPKLIVAVENPQLLRPFVDLIGDELNVKQVELTDAIDTYGRFELTVNARVAGPRLGKDVQAAIKAVKAGDGVINPDGTLLAGPAVLTADEYNSRLVAADPESTAALPDGAGLVVLDGTVTAELEAEGWAKDRIRELQELRKSTGLDVSDRIRVVMSVPAEREDWARTHRDLIAGEILATDFEFADLADGVAIGDGVRVSIEKT.

Positions 53-63 (PFANGLPHYGH) match the 'HIGH' region motif. Positions 619–623 (KMSKS) match the 'KMSKS' region motif. ATP is bound at residue K622.

This sequence belongs to the class-I aminoacyl-tRNA synthetase family. IleS type 2 subfamily. In terms of assembly, monomer. Requires Zn(2+) as cofactor.

The protein localises to the cytoplasm. It carries out the reaction tRNA(Ile) + L-isoleucine + ATP = L-isoleucyl-tRNA(Ile) + AMP + diphosphate. Functionally, catalyzes the attachment of isoleucine to tRNA(Ile). As IleRS can inadvertently accommodate and process structurally similar amino acids such as valine, to avoid such errors it has two additional distinct tRNA(Ile)-dependent editing activities. One activity is designated as 'pretransfer' editing and involves the hydrolysis of activated Val-AMP. The other activity is designated 'posttransfer' editing and involves deacylation of mischarged Val-tRNA(Ile). This is Isoleucine--tRNA ligase from Mycobacterium bovis (strain ATCC BAA-935 / AF2122/97).